A 594-amino-acid polypeptide reads, in one-letter code: Arginine--tRNA ligase (594 aa).

The short motif at 139-149 is the 'HIGH' region element; that stretch reads ANPTGPLHVGH.

It belongs to the class-I aminoacyl-tRNA synthetase family. Monomer.

It is found in the cytoplasm. It catalyses the reaction tRNA(Arg) + L-arginine + ATP = L-arginyl-tRNA(Arg) + AMP + diphosphate. The protein is Arginine--tRNA ligase of Burkholderia pseudomallei (strain 1106a).